The primary structure comprises 784 residues: Toll-like receptor 2 (784 aa).

Positions 1 to 20 (MPRALWTAWVWAVISVFTEG) are cleaved as a signal peptide. At 21-587 (ASDQASSLSC…ARLSLSECHR (567 aa)) the chain is on the extracellular side. A disulfide bridge links C30 with C36. LRR repeat units lie at residues 54-77 (VKSL…RCVN), 78-101 (LKTL…HLRN), 102-125 (LEYL…SLYV), 126-150 (LKFL…HLPN), 151-175 (LRTL…GLTF), 176-199 (LEEL…SIQN), 200-223 (ISHL…IVSS), 224-250 (LDYL…INTS), 251-278 (VKKL…YVSG), 279-308 (ILEV…YLGN), 309-337 (VETL…LTGK), 338-361 (VKRV…HLKS), 362-388 (LEYL…AWPV), 389-414 (LQTL…TLKN), 415-437 (LNNL…WPGK), 438-457 (MKQL…CLPQ), 458-478 (TLEI…ILPQ), 479-500 (LKEL…FLPV), and 501-524 (LSVM…SFPQ). Residue N114 is glycosylated (N-linked (GlcNAc...) asparagine). N199 carries an N-linked (GlcNAc...) asparagine glycan. The N-linked (GlcNAc...) asparagine glycan is linked to N248. Cysteines 353 and 382 form a disulfide. An intrachain disulfide couples C432 to C454. N442 carries an N-linked (GlcNAc...) asparagine glycan. The LRRCT domain maps to 525–579 (LKALEAGGNNFICSCDFLSFAQGQQALARVLVDWPDGYRCDAPSHVRGQRVQDAR). A helical membrane pass occupies residues 588–608 (AAVVSAVCCALFLLLLLTGVL). The Cytoplasmic portion of the chain corresponds to 609–784 (CHRFHGLWYM…WLNLRAAIRS (176 aa)). Residues 639–782 (LCYDAFVSYS…AFWLNLRAAI (144 aa)) enclose the TIR domain. A Glycyl lysine isopeptide (Lys-Gly) (interchain with G-Cter in ubiquitin) cross-link involves residue K754. Residues 761–778 (YLEWPTDETHREAFWLNL) carry the ATG16L1-binding motif motif.

The protein belongs to the Toll-like receptor family. Interacts with LY96, TLR1 and TLR6 (via extracellular domain). TLR2 seems to exist in heterodimers with either TLR1 or TLR6 before stimulation by the ligand. The heterodimers form bigger oligomers in response to their corresponding ligands as well as further heterotypic associations with other receptors such as CD14 and/or CD36. Binds MYD88 (via TIR domain). Interacts with TICAM1. Interacts with CNPY3. Interacts with ATG16L1. Interacts with PPP1R11. Interacts with TICAM2. Interacts with TIRAP. In terms of processing, ubiquitinated at Lys-754 by PPP1R11, leading to its degradation. Deubiquitinated by USP2. Post-translationally, glycosylation of Asn-442 is critical for secretion of the N-terminal ectodomain of TLR2.

Its subcellular location is the membrane. It localises to the cytoplasmic vesicle. The protein localises to the phagosome membrane. It is found in the membrane raft. Cooperates with LY96 to mediate the innate immune response to bacterial lipoproteins and other microbial cell wall components. Cooperates with TLR1 or TLR6 to mediate the innate immune response to bacterial lipoproteins or lipopeptides. Acts via MYD88 and TRAF6, leading to NF-kappa-B activation, cytokine secretion and the inflammatory response. May also promote apoptosis in response to lipoproteins. Forms activation clusters composed of several receptors depending on the ligand, these clusters trigger signaling from the cell surface and subsequently are targeted to the Golgi in a lipid-raft dependent pathway. Forms the cluster TLR2:TLR6:CD14:CD36 in response to diacylated lipopeptides and TLR2:TLR1:CD14 in response to triacylated lipopeptides. In Ovis aries (Sheep), this protein is Toll-like receptor 2 (TLR2).